Consider the following 114-residue polypeptide: Large ribosomal subunit protein bL20 (114 aa).

It belongs to the bacterial ribosomal protein bL20 family.

Functionally, binds directly to 23S ribosomal RNA and is necessary for the in vitro assembly process of the 50S ribosomal subunit. It is not involved in the protein synthesizing functions of that subunit. The chain is Large ribosomal subunit protein bL20 from Parabacteroides distasonis (strain ATCC 8503 / DSM 20701 / CIP 104284 / JCM 5825 / NCTC 11152).